The chain runs to 110 residues: Putative protein RIG (110 aa).

As to expression, expressed predominantly in brain and weakly in heart and lung. Expression is reduced or undetectable in cultured glioma cells, primary glioblastoma cells and malignant glioblastoma tumors.

May serve as a molecular marker for or play a role in the malignant progression of glioblastomas. This is Putative protein RIG (RIG) from Homo sapiens (Human).